A 180-amino-acid polypeptide reads, in one-letter code: Large ribosomal subunit protein uL6 (180 aa).

The protein belongs to the universal ribosomal protein uL6 family. Part of the 50S ribosomal subunit.

This protein binds to the 23S rRNA, and is important in its secondary structure. It is located near the subunit interface in the base of the L7/L12 stalk, and near the tRNA binding site of the peptidyltransferase center. In Clostridium botulinum (strain Loch Maree / Type A3), this protein is Large ribosomal subunit protein uL6.